The following is a 297-amino-acid chain: Putative S-adenosyl-L-methionine-dependent methyltransferase Mmcs_1044 (297 aa).

S-adenosyl-L-methionine contacts are provided by residues aspartate 124 and 153–154 (DL).

The protein belongs to the UPF0677 family.

Functionally, exhibits S-adenosyl-L-methionine-dependent methyltransferase activity. In Mycobacterium sp. (strain MCS), this protein is Putative S-adenosyl-L-methionine-dependent methyltransferase Mmcs_1044.